Here is a 2259-residue protein sequence, read N- to C-terminus: Putative Polycomb group protein ASXL3 (2259 aa).

The region spanning 10 to 83 (RTWAEAARLA…KSGLYALRKE (74 aa)) is the HTH HARE-type domain. The interval 181–230 (VVLTPLKVSDEQSDSPSGSESKNGEADSSDKEMKHGQKSPTGKQTSQHLK) is disordered. Residues 202–215 (KNGEADSSDKEMKH) show a composition bias toward basic and acidic residues. Residues 218-227 (KSPTGKQTSQ) show a composition bias toward polar residues. The region spanning 253 to 362 (PGSILVNTNL…FERFYGERSG (110 aa)) is the DEUBAD domain. Disordered stretches follow at residues 364–399 (SREESIKLTSGPNHEGAEGSSSHGDSGIPGPSAQNA), 607–643 (CISETSFSSESPEGACASLPSPGGETQSTSEESCTPA), 703–810 (EASP…IPEP), 857–1012 (SEMT…PLKI), 1025–1049 (SQPVSKAESRASTSTSVSSGRNTGA), 1126–1150 (RLPSVSTKEDSLNMEASPTPETKME), 1433–1462 (LSGENLDNNSGPLNRTDNSEKPQQPAGGFV), 1614–1643 (DPMRNTAPPVVSHSSSSKQKEHPEQTGLKA), 1687–1719 (DFPGPERPPPVTEVTSSASVQPTQTMKPSTTSP), and 1993–2075 (NMLS…TTKR). Polar residues-rich tracts occupy residues 607-617 (CISETSFSSES), 630-643 (GETQSTSEESCTPA), and 703-717 (EASPVSNLPLTSEAS). Positions 722–741 (LPPTSETSSESSMPLTSETP) are enriched in low complexity. Polar residues-rich tracts occupy residues 770 to 781 (KSPSGSEEANSP) and 926 to 945 (QSSTLNRLETSHTSKVSEPS). 2 stretches are compositionally biased toward basic and acidic residues: residues 949–985 (DGIRNDNRESEISKRKTVEHSFGICKEKRARIEDDQS) and 995–1006 (PEKEQPPREEPR). The segment covering 1034-1043 (RASTSTSVSS) has biased composition (low complexity). Residues 1437-1448 (NLDNNSGPLNRT) are compositionally biased toward polar residues. The span at 1699-1719 (EVTSSASVQPTQTMKPSTTSP) shows a compositional bias: polar residues. A compositionally biased stretch (pro residues) spans 2023-2055 (PLPPPPPPPPPPPPPLALPPPPPPPPPLPPPLP). Residues 2221-2258 (ELKCSCRLKAMIVCKGCGAFCHDDCIGPSKLCVACLVV) form a PHD-type; atypical zinc finger.

The protein belongs to the Asx family. In terms of assembly, core component of the polycomb repressive deubiquitinase (PR-DUB) complex, at least composed of BAP1, one of ASXL1, ASXL2 or (probably) ASXL3, and one of MBD5 or MBD6. Distinct combinations of ASXL and MBD proteins may preferentially bind specific histone modification marks. The PR-DUB core associates with a number of accessory proteins, including FOXK1, FOXK2, KDM1B, HCFC1 and OGT; KDM1B specifically associates with ASXL2 PR-DUB complexes. Interacts (via PHD domain) with MBD5 and MBD6 (via MBD domain); the interaction is probably direct and mediates association of MBD proteins with the PR-DUB core.

It localises to the nucleus. Putative Polycomb group (PcG) protein. PcG proteins act by forming multiprotein complexes, which are required to maintain the transcriptionally repressive state of homeotic genes throughout development. PcG proteins are not required to initiate repression, but to maintain it during later stages of development. They probably act via methylation of histones, rendering chromatin heritably changed in its expressibility. Non-catalytic component of the PR-DUB complex, a complex that specifically mediates deubiquitination of histone H2A monoubiquitinated at 'Lys-119' (H2AK119ub1). The PR-DUB complex is an epigenetic regulator of gene expression and acts as a transcriptional coactivator, affecting genes involved in development, cell communication, signaling, cell proliferation and cell viability. ASXL1, ASXL2 and ASXL3 function redundantly in the PR-DUB complex and are essential for chromatin recruitment and transcriptional activation of associated genes. The sequence is that of Putative Polycomb group protein ASXL3 (Asxl3) from Mus musculus (Mouse).